Here is a 652-residue protein sequence, read N- to C-terminus: DNA ligase (652 aa).

NAD(+) contacts are provided by residues 29 to 33, 78 to 79, and Glu107; these read DAEYD and SL. Residue Lys109 is the N6-AMP-lysine intermediate of the active site. NAD(+) is bound by residues Arg130, Glu164, Lys278, and Lys302. The Zn(2+) site is built by Cys395, Cys398, Cys413, and Cys418. One can recognise a BRCT domain in the interval 577–652; the sequence is DENAALSGMT…IKDEAWLESL (76 aa).

Belongs to the NAD-dependent DNA ligase family. LigA subfamily. Requires Mg(2+) as cofactor. The cofactor is Mn(2+).

The enzyme catalyses NAD(+) + (deoxyribonucleotide)n-3'-hydroxyl + 5'-phospho-(deoxyribonucleotide)m = (deoxyribonucleotide)n+m + AMP + beta-nicotinamide D-nucleotide.. Functionally, DNA ligase that catalyzes the formation of phosphodiester linkages between 5'-phosphoryl and 3'-hydroxyl groups in double-stranded DNA using NAD as a coenzyme and as the energy source for the reaction. It is essential for DNA replication and repair of damaged DNA. This is DNA ligase from Streptococcus suis (strain 98HAH33).